The chain runs to 125 residues: Holo-[acyl-carrier-protein] synthase (125 aa).

Residues Asp8 and Glu57 each contribute to the Mg(2+) site.

The protein belongs to the P-Pant transferase superfamily. AcpS family. The cofactor is Mg(2+).

The protein localises to the cytoplasm. The catalysed reaction is apo-[ACP] + CoA = holo-[ACP] + adenosine 3',5'-bisphosphate + H(+). In terms of biological role, transfers the 4'-phosphopantetheine moiety from coenzyme A to a Ser of acyl-carrier-protein. In Geobacter sp. (strain M21), this protein is Holo-[acyl-carrier-protein] synthase.